The chain runs to 361 residues: 5-formaminoimidazole-4-carboxamide-1-(beta)-D-ribofuranosyl 5'-monophosphate synthetase (361 aa).

5-amino-1-(5-phospho-beta-D-ribosyl)imidazole-4-carboxamide is bound by residues His27 and Ser94. The ATP-grasp domain maps to 116-348; it reads RAILRWEAER…MGQRIAKEIK (233 aa). Residues 146–208 and Glu230 contribute to the ATP site; that span reads PDDI…ANYC. Residue Asn258 coordinates 5-amino-1-(5-phospho-beta-D-ribosyl)imidazole-4-carboxamide. 2 residues coordinate Mg(2+): Gln297 and Glu310.

Belongs to the phosphohexose mutase family. The cofactor is Mg(2+). Requires Mn(2+) as cofactor.

It carries out the reaction 5-amino-1-(5-phospho-beta-D-ribosyl)imidazole-4-carboxamide + formate + ATP = 5-formamido-1-(5-phospho-D-ribosyl)imidazole-4-carboxamide + ADP + phosphate. Its pathway is purine metabolism; IMP biosynthesis via de novo pathway; 5-formamido-1-(5-phospho-D-ribosyl)imidazole-4-carboxamide from 5-amino-1-(5-phospho-D-ribosyl)imidazole-4-carboxamide (formate route): step 1/1. Its function is as follows. Catalyzes the ATP- and formate-dependent formylation of 5-aminoimidazole-4-carboxamide-1-beta-d-ribofuranosyl 5'-monophosphate (AICAR) to 5-formaminoimidazole-4-carboxamide-1-beta-d-ribofuranosyl 5'-monophosphate (FAICAR) in the absence of folates. This is 5-formaminoimidazole-4-carboxamide-1-(beta)-D-ribofuranosyl 5'-monophosphate synthetase from Methanococcus maripaludis (strain C6 / ATCC BAA-1332).